The chain runs to 558 residues: Galactoside 2-alpha-L-fucosyltransferase (558 aa).

Over Met-1–Arg-43 the chain is Cytoplasmic. The helical; Signal-anchor for type II membrane protein transmembrane segment at Thr-44–Gln-64 threads the bilayer. Residues His-65–Val-558 are Lumenal-facing. N-linked (GlcNAc...) asparagine glycosylation is found at Asn-88 and Asn-504.

The protein belongs to the glycosyltransferase 37 family. As to quaternary structure, homodimer. Interacts with MUR3, XLT2, XXT2 and XXT5. As to expression, expressed in roots, stems, leaves, flowers, siliques and seedlings.

It is found in the golgi apparatus. The protein localises to the golgi stack membrane. It localises to the golgi apparatus membrane. Involved in cell wall biosynthesis. Is both necessary and sufficient for the addition of the terminal fucosyl residue on xyloglucan side chains, but is not involved in the fucosylation of other cell wall components. Associates with other xyloglucan-synthesizing enzymes to form multiprotein complexes for xyloglucan synthesis in the Golgi. The chain is Galactoside 2-alpha-L-fucosyltransferase (FUT1) from Arabidopsis thaliana (Mouse-ear cress).